Consider the following 225-residue polypeptide: Uracil-DNA glycosylase (225 aa).

D64 (proton acceptor) is an active-site residue.

The protein belongs to the uracil-DNA glycosylase (UDG) superfamily. UNG family.

It localises to the cytoplasm. The enzyme catalyses Hydrolyzes single-stranded DNA or mismatched double-stranded DNA and polynucleotides, releasing free uracil.. Functionally, excises uracil residues from the DNA which can arise as a result of misincorporation of dUMP residues by DNA polymerase or due to deamination of cytosine. The polypeptide is Uracil-DNA glycosylase (Lachnoclostridium phytofermentans (strain ATCC 700394 / DSM 18823 / ISDg) (Clostridium phytofermentans)).